Here is a 277-residue protein sequence, read N- to C-terminus: Phosphatidylglycerol--prolipoprotein diacylglyceryl transferase (277 aa).

4 helical membrane-spanning segments follow: residues W22–A42, I51–Y71, I89–I109, and I116–G136. Position 137 (R137) interacts with a 1,2-diacyl-sn-glycero-3-phospho-(1'-sn-glycerol). The next 3 helical transmembrane spans lie at Q177 to I197, G205 to M225, and F235 to Y255.

Belongs to the Lgt family.

It localises to the cell membrane. The catalysed reaction is L-cysteinyl-[prolipoprotein] + a 1,2-diacyl-sn-glycero-3-phospho-(1'-sn-glycerol) = an S-1,2-diacyl-sn-glyceryl-L-cysteinyl-[prolipoprotein] + sn-glycerol 1-phosphate + H(+). The protein operates within protein modification; lipoprotein biosynthesis (diacylglyceryl transfer). Functionally, catalyzes the transfer of the diacylglyceryl group from phosphatidylglycerol to the sulfhydryl group of the N-terminal cysteine of a prolipoprotein, the first step in the formation of mature lipoproteins. This Listeria welshimeri serovar 6b (strain ATCC 35897 / DSM 20650 / CCUG 15529 / CIP 8149 / NCTC 11857 / SLCC 5334 / V8) protein is Phosphatidylglycerol--prolipoprotein diacylglyceryl transferase.